Here is a 552-residue protein sequence, read N- to C-terminus: MAPASSNPGPYSLPDKDEVQLSAEDDWTRVKDRKEKKRIQNRVAQRSYRSRMKARLGELQSRLQAHEEQKAKEEAERCDPSPPSPPSSSATGLHLHTTPPSGNNAGANDTEPSSINSASPPTPPDVVGDLDPSQHAKAIDQFSHQMDMAGNDDSQWFLDSTSLLQHGDTSSYIQPSVPTPPVSLSQCPPMPAYMPEGPRNPNDGPASLSQSILQDCLRFQIQLLAKINNPSEATSTTHKEEGSAAKSPGALQQSHWSSCATNPAAAAQNMMPSTNMARGNSFSVLPADFHNLDDMMELTSTGDLPNATWRPSQQFSGPETTPRSHNAENPTQQQSPINDDTPSTTQHGAVPDCYNAFVAKSSAQASSLGMEERLEAAIEGLEALGFTSVDSFAEAYYSSSFDESSHLAAEQSMSRKRRLPRMLSQILDSAQSWDPWDRRGLNEEVLRTAESLLVAEGKSMDEKSLEASISGLMQATEGSSKPTPPQQNVTGMKRVLQNELPNLWPVMMALAGGNRASRQRDRSNMVLAAILILHCSSKMTKQKLLEFLDVCL.

Disordered regions lie at residues 1 to 132 (MAPA…DLDP), 169 to 209 (TSSY…ASLS), 232 to 258 (EATSTTHKEEGSAAKSPGALQQSHWSS), and 297 to 349 (ELTS…QHGA). The basic motif stretch occupies residues 31–55 (KDRKEKKRIQNRVAQRSYRSRMKAR). The bZIP domain occupies 31–76 (KDRKEKKRIQNRVAQRSYRSRMKARLGELQSRLQAHEEQKAKEEAE). The interval 56-63 (LGELQSRL) is leucine-zipper. Residues 64–79 (QAHEEQKAKEEAERCD) show a composition bias toward basic and acidic residues. 2 stretches are compositionally biased toward polar residues: residues 98-119 (TPPSGNNAGANDTEPSSINSAS) and 169-186 (TSSYIQPSVPTPPVSLSQ). Over residues 298 to 347 (LTSTGDLPNATWRPSQQFSGPETTPRSHNAENPTQQQSPINDDTPSTTQH) the composition is skewed to polar residues.

The protein belongs to the bZIP family.

The protein localises to the nucleus. Transcription factor that regulates the expression of the gene cluster that mediates the biosynthesis of the lipopeptide antibiotics leucinostatins that show extensive biological activities, including antimalarial, antiviral, antibacterial, antifungal, and antitumor activities, as well as phytotoxic. All 20 genes in the cluster are up-regulated to some extent by lcsF, with the exception of lcsL and lcsP, which are down-regulated. This chain is Transcription factor lcsF, found in Purpureocillium lilacinum (Paecilomyces lilacinus).